The sequence spans 614 residues: MALPTQQADELRLYQQTLLQDGLKDMLDHDNFIDCVLKIQGKEFPCHRLVLAACSPYFRAMFLSNLEEGKKKEIDLEDVDPDVMGKILHYIYTSEIEITEKNVQDIFSVANMFQIPSIFTVCVSFLQKKLCLSNCLAIFRLGLLLDCPRLAVSARDFVCDRFHLIARDEEFYDLSPDELIAVISSDSLNIEKEEEVFEVVLKWALKEKEKRAKALPIIFESIRFRLIPQDYIKNKVEKHELVKSDKELLKKLQMVKDAQEGKLPAAVKKTPSKASEGKDGEGVVNGDLEEEEEALPGILNDTLRFGMFLKDMIFMISDTGAVAYDPSANECFFASLSAQIPKNHVSLATKENQLFVAGGLYYNEENKDDPLSSYFLQFDHLDSDWLGMPPVPSARCLFGLGESDNSIYLIGGKELKEGEQTLDTVLCYDRPSFKWGESDPLPYQVYGHTVVSHDNLVYVLGGKGNEKKCLKRVCVYNPKKFEWKDLAPMKTARSLFGSTVHKGKILIAAGVTDTGLTNTIEAYDVKTNKWEEFTEFPQERSSLSLVSMNGTLYAIGGFATTENESGEFVPTELNDIWRFNEEEKKWEGILREIRYASGATFVAARLNILRLTKM.

The region spanning isoleucine 33 to glutamate 100 is the BTB domain. The BACK domain occupies cysteine 135–glutamate 237. 5 Kelch repeats span residues glutamine 353–asparagine 405, serine 406–asparagine 455, leucine 456–glycine 503, isoleucine 505–glycine 550, and leucine 552–leucine 606.

Belongs to the KLHL40 family. Component of the BCR(KLHL40) E3 ubiquitin ligase complex.

It is found in the cytoplasm. Its subcellular location is the myofibril. The protein resides in the sarcomere. It localises to the a band. The protein localises to the i band. Its function is as follows. Substrate-specific adapter of a BCR (BTB-CUL3-RBX1) E3 ubiquitin ligase complex that acts as a key regulator of skeletal muscle development. In Xenopus tropicalis (Western clawed frog), this protein is Kelch-like protein 40 (klhl40).